We begin with the raw amino-acid sequence, 125 residues long: Calcitonin receptor-stimulating peptide 1 (125 aa).

Residues 1 to 25 (MGFWKFPPFLVLSILVLYQAGMFHA) form the signal peptide. Residues 26-77 (APFRSVFDGRFDPATLDEEESRLLLAAMVNDYEQMRARESEKAQKTEGSRIQ) constitute a propeptide that is removed on maturation. A disulfide bridge connects residues Cys-81 and Cys-86.

The protein belongs to the calcitonin family.

The protein resides in the secreted. Stimulates cAMP production in porcine kidney cell line LLC-PK1 via the calcitonin receptor (CT) but not via the CT-like (CL) receptor. This is Calcitonin receptor-stimulating peptide 1 (CRSP1) from Bos taurus (Bovine).